The sequence spans 600 residues: Aspartate--tRNA(Asp/Asn) ligase (600 aa).

Residue Glu174 coordinates L-aspartate. The interval Gln198–Lys201 is aspartate. Arg220 provides a ligand contact to L-aspartate. ATP is bound by residues Arg220–Glu222 and Gln229. Position 457 (His457) interacts with L-aspartate. Residue Glu491 participates in ATP binding. Residue Arg498 participates in L-aspartate binding. Residue Gly543–Arg546 participates in ATP binding.

Belongs to the class-II aminoacyl-tRNA synthetase family. Type 1 subfamily. Homodimer.

It is found in the cytoplasm. The enzyme catalyses tRNA(Asx) + L-aspartate + ATP = L-aspartyl-tRNA(Asx) + AMP + diphosphate. Aspartyl-tRNA synthetase with relaxed tRNA specificity since it is able to aspartylate not only its cognate tRNA(Asp) but also tRNA(Asn). Reaction proceeds in two steps: L-aspartate is first activated by ATP to form Asp-AMP and then transferred to the acceptor end of tRNA(Asp/Asn). The sequence is that of Aspartate--tRNA(Asp/Asn) ligase from Burkholderia ambifaria (strain ATCC BAA-244 / DSM 16087 / CCUG 44356 / LMG 19182 / AMMD) (Burkholderia cepacia (strain AMMD)).